Here is a 321-residue protein sequence, read N- to C-terminus: Phosphopantothenate--cysteine ligase 1 (321 aa).

It belongs to the PPC synthetase family. As to quaternary structure, homodimer.

The enzyme catalyses (R)-4'-phosphopantothenate + L-cysteine + CTP = N-[(R)-4-phosphopantothenoyl]-L-cysteine + CMP + diphosphate + H(+). Its pathway is cofactor biosynthesis; coenzyme A biosynthesis; CoA from (R)-pantothenate: step 2/5. Its function is as follows. Catalyzes the first step in the biosynthesis of coenzyme A from vitamin B5, where cysteine is conjugated to 4'-phosphopantothenate to form 4-phosphopantothenoylcysteine. The protein is Phosphopantothenate--cysteine ligase 1 of Oryza sativa subsp. japonica (Rice).